The primary structure comprises 278 residues: Sulfur carrier protein FdhD (278 aa).

Cysteine 113 (cysteine persulfide intermediate) is an active-site residue. 251–256 (FCRNGR) provides a ligand contact to Mo-bis(molybdopterin guanine dinucleotide).

The protein belongs to the FdhD family.

It localises to the cytoplasm. In terms of biological role, required for formate dehydrogenase (FDH) activity. Acts as a sulfur carrier protein that transfers sulfur from IscS to the molybdenum cofactor prior to its insertion into FDH. The chain is Sulfur carrier protein FdhD from Shewanella oneidensis (strain ATCC 700550 / JCM 31522 / CIP 106686 / LMG 19005 / NCIMB 14063 / MR-1).